An 859-amino-acid chain; its full sequence is Bifunctional levopimaradiene synthase, chloroplastic (859 aa).

The N-terminal 70 residues, 1–70 (MALLSSSLSS…IACVGEDSLS (70 aa)), are a transit peptide targeting the chloroplast. Substrate is bound at residue Lys-259. The Mg(2+) site is built by Asp-392 and Asp-394. Positions 392-395 (DIDD) match the DXDD motif motif. Lys-479 is a binding site for substrate. 5 residues coordinate Mg(2+): Asp-611, Asp-615, Asn-755, Thr-759, and Glu-763. The DDXXD motif signature appears at 611 to 615 (DDLYD).

This sequence belongs to the terpene synthase family. Tpsd subfamily. Mg(2+) serves as cofactor.

It localises to the plastid. Its subcellular location is the chloroplast. It carries out the reaction (2E,6E,10E)-geranylgeranyl diphosphate = (+)-copalyl diphosphate. It catalyses the reaction (+)-copalyl diphosphate = abieta-8(14),12-diene + diphosphate. It participates in terpene metabolism; oleoresin biosynthesis. Its function is as follows. Involved in defensive oleoresin formation in conifers in response to insect attack or other injury. Involved in diterpene (C20) olefins biosynthesis. Bifunctional enzyme that catalyzes two sequential cyclizations of geranylgeranyl diphosphate (GGPP) to levopimaradiene. Levopimaradiene is the major products of the enzyme followed by abietadiene, neoabietadiene and palustradiene. This is Bifunctional levopimaradiene synthase, chloroplastic (TPS-LAS) from Picea abies (Norway spruce).